A 291-amino-acid polypeptide reads, in one-letter code: MPTLKDIRVRIKGVKSTQQVTKAMKMVAAAKLRRAQERAIMARPYARKLKEMLGSLSDKVDTSLNPLLSNRSEVNKVVVILITADRGLCGAFNTNIVKLAYKLIHEDYAAQHSKNGVSLICAGSRGFDFFRKRGYNIIKGYPGVFQRLDFSFAKEIAETVSGMYLRGEADRVVVVYNEFKSVLAPVLKFETLLPITPEASGKDGGSDYIYEPSPESIIDVLVPKHLNTQVWRVMLESNAAEQAARMSAMDSATENAKELLRTLNISYNRARQAAITKELSEIVGGADALKG.

It belongs to the ATPase gamma chain family. As to quaternary structure, F-type ATPases have 2 components, CF(1) - the catalytic core - and CF(0) - the membrane proton channel. CF(1) has five subunits: alpha(3), beta(3), gamma(1), delta(1), epsilon(1). CF(0) has three main subunits: a, b and c.

The protein localises to the cell inner membrane. Its function is as follows. Produces ATP from ADP in the presence of a proton gradient across the membrane. The gamma chain is believed to be important in regulating ATPase activity and the flow of protons through the CF(0) complex. The polypeptide is ATP synthase gamma chain (Chlorobium phaeobacteroides (strain DSM 266 / SMG 266 / 2430)).